Here is a 240-residue protein sequence, read N- to C-terminus: Urease accessory protein UreF (240 aa).

It belongs to the UreF family. UreD, UreF and UreG form a complex that acts as a GTP-hydrolysis-dependent molecular chaperone, activating the urease apoprotein by helping to assemble the nickel containing metallocenter of UreC. The UreE protein probably delivers the nickel.

The protein resides in the cytoplasm. Functionally, required for maturation of urease via the functional incorporation of the urease nickel metallocenter. This is Urease accessory protein UreF from Bradyrhizobium sp. (strain ORS 278).